We begin with the raw amino-acid sequence, 217 residues long: Sentrin-specific protease 8 (217 aa).

Met1 is modified (N-acetylmethionine). A protease region spans residues 11–174; sequence SLLRQSDVSL…MYVICNTEAL (164 aa). Active-site residues include His102 and Asp119. Residue Cys163 is the Nucleophile of the active site.

This sequence belongs to the peptidase C48 family.

Its function is as follows. Protease that catalyzes two essential functions in the NEDD8 pathway: processing of full-length NEDD8 to its mature form and deconjugation of NEDD8 from targeted proteins such as cullins or p53. The chain is Sentrin-specific protease 8 (Senp8) from Rattus norvegicus (Rat).